The following is a 476-amino-acid chain: Eukaryotic translation initiation factor 3 subunit L (476 aa).

Residues 257–452 (DAIRMFSHIL…DLDYALENDL (196 aa)) enclose the PCI domain.

This sequence belongs to the eIF-3 subunit L family. Component of the eukaryotic translation initiation factor 3 (eIF-3) complex.

It is found in the cytoplasm. In terms of biological role, component of the eukaryotic translation initiation factor 3 (eIF-3) complex, which is involved in protein synthesis of a specialized repertoire of mRNAs and, together with other initiation factors, stimulates binding of mRNA and methionyl-tRNAi to the 40S ribosome. The eIF-3 complex specifically targets and initiates translation of a subset of mRNAs involved in cell proliferation. This chain is Eukaryotic translation initiation factor 3 subunit L, found in Aspergillus fumigatus (strain CBS 144.89 / FGSC A1163 / CEA10) (Neosartorya fumigata).